The following is a 173-amino-acid chain: Putative metal-dependent hydrolase BCE_2729 (173 aa).

Residues His-65, His-156, and His-160 each coordinate Zn(2+).

The protein belongs to the metal hydrolase YfiT family. In terms of assembly, homodimer. Zn(2+) serves as cofactor.

The protein resides in the cytoplasm. Possible metal-dependent hydrolase. This chain is Putative metal-dependent hydrolase BCE_2729, found in Bacillus cereus (strain ATCC 10987 / NRS 248).